Here is a 657-residue protein sequence, read N- to C-terminus: DNA ligase (657 aa).

Ser-80 to Leu-81 serves as a coordination point for NAD(+). Lys-104 acts as the N6-AMP-lysine intermediate in catalysis. NAD(+)-binding residues include Arg-125, Glu-159, and Lys-297. Zn(2+)-binding residues include Cys-386, Cys-389, Cys-406, and Cys-411. Residues Gln-571 to Glu-657 enclose the BRCT domain.

This sequence belongs to the NAD-dependent DNA ligase family. LigA subfamily. Requires Mg(2+) as cofactor. Mn(2+) serves as cofactor.

The catalysed reaction is NAD(+) + (deoxyribonucleotide)n-3'-hydroxyl + 5'-phospho-(deoxyribonucleotide)m = (deoxyribonucleotide)n+m + AMP + beta-nicotinamide D-nucleotide.. Functionally, DNA ligase that catalyzes the formation of phosphodiester linkages between 5'-phosphoryl and 3'-hydroxyl groups in double-stranded DNA using NAD as a coenzyme and as the energy source for the reaction. It is essential for DNA replication and repair of damaged DNA. The protein is DNA ligase of Ruminiclostridium cellulolyticum (strain ATCC 35319 / DSM 5812 / JCM 6584 / H10) (Clostridium cellulolyticum).